The sequence spans 1744 residues: Retrotransposon-like protein 1 (1744 aa).

Disordered regions lie at residues 1–416 (MIEP…SPEE), 823–859 (READ…DQSG), and 1287–1439 (SSET…EVPS). Low complexity predominate over residues 19–30 (SSKQMESSEGSS). The span at 31 to 40 (NTVEETPGSS) shows a compositional bias: polar residues. Positions 41 to 80 (GAQAGAQAGAQAEAQAETQVEAQAEAQAEAQVEAQVEAQA) are enriched in low complexity. Residues 269-318 (DGSNQESSDGSNHELSNGSNHESSFGSNPESSDVSNLESSGGSNQESSDG) show a composition bias toward polar residues. Over residues 332-361 (SDNSNQELSDNSNQESSDSSNQSSDISNQE) the composition is skewed to low complexity. 3 stretches are compositionally biased toward acidic residues: residues 385-407 (SDQD…GEEE), 837-846 (GSDDLSESEP), and 1291-1437 (EDKE…DEEV). Transmembrane regions (helical) follow at residues 1473 to 1493 (FFRG…LVML) and 1520 to 1540 (LILD…AQLL).

As to expression, expressed in placenta and in various tissues in late-fetal stage.

It is found in the membrane. Plays an essential role in capillaries endothelial cells for the maintenance of feto-maternal interface and for development of the placenta. In Mus musculus (Mouse), this protein is Retrotransposon-like protein 1 (Rtl1).